We begin with the raw amino-acid sequence, 320 residues long: Cytochrome f (320 aa).

Positions Met1 to Ala35 are cleaved as a signal peptide. Tyr36, Cys56, Cys59, and His60 together coordinate heme. A helical transmembrane segment spans residues Val286–Lys306.

It belongs to the cytochrome f family. The 4 large subunits of the cytochrome b6-f complex are cytochrome b6, subunit IV (17 kDa polypeptide, petD), cytochrome f and the Rieske protein, while the 4 small subunits are PetG, PetL, PetM and PetN. The complex functions as a dimer. Heme is required as a cofactor.

The protein resides in the plastid. It localises to the chloroplast thylakoid membrane. In terms of biological role, component of the cytochrome b6-f complex, which mediates electron transfer between photosystem II (PSII) and photosystem I (PSI), cyclic electron flow around PSI, and state transitions. The sequence is that of Cytochrome f from Phalaenopsis aphrodite subsp. formosana (Moth orchid).